Reading from the N-terminus, the 332-residue chain is Probable allantoicase (332 aa).

Belongs to the allantoicase family.

The catalysed reaction is allantoate + H2O = (S)-ureidoglycolate + urea. It participates in nitrogen metabolism; (S)-allantoin degradation; (S)-ureidoglycolate from allantoate (aminidohydrolase route): step 1/1. This Pseudomonas aeruginosa (strain UCBPP-PA14) protein is Probable allantoicase.